The following is a 295-amino-acid chain: Probable endonuclease lcl3 (295 aa).

Residues 1–35 (MRWPPWASDSQAQQQTAKHDEHDERQAAAKSTTTS) form a disordered region. The segment covering 17–27 (AKHDEHDERQA) has biased composition (basic and acidic residues). Residues 52-74 (FTEARTIIPTLILTSGFLGAFYI) traverse the membrane as a helical segment. A TNase-like domain is found at 96–263 (RSLLGQVTSV…KLRGVGLWKD (168 aa)). R147 is an active-site residue. Ca(2+) is bound at residue D152. Catalysis depends on residues E155 and R195.

Belongs to the LCL3 family.

The protein localises to the mitochondrion. The protein resides in the membrane. The sequence is that of Probable endonuclease lcl3 (lcl3) from Neosartorya fischeri (strain ATCC 1020 / DSM 3700 / CBS 544.65 / FGSC A1164 / JCM 1740 / NRRL 181 / WB 181) (Aspergillus fischerianus).